The sequence spans 199 residues: Imidazoleglycerol-phosphate dehydratase (199 aa).

This sequence belongs to the imidazoleglycerol-phosphate dehydratase family.

It localises to the cytoplasm. The enzyme catalyses D-erythro-1-(imidazol-4-yl)glycerol 3-phosphate = 3-(imidazol-4-yl)-2-oxopropyl phosphate + H2O. It participates in amino-acid biosynthesis; L-histidine biosynthesis; L-histidine from 5-phospho-alpha-D-ribose 1-diphosphate: step 6/9. The chain is Imidazoleglycerol-phosphate dehydratase from Paramagnetospirillum magneticum (strain ATCC 700264 / AMB-1) (Magnetospirillum magneticum).